A 683-amino-acid chain; its full sequence is Receptor-like serine/threonine-protein kinase At2g45590 (683 aa).

Residues 1 to 21 form a disordered region; that stretch reads MPSRLSPPDIPPLQPTPTVSD. At 1-30 the chain is on the extracellular side; sequence MPSRLSPPDIPPLQPTPTVSDGHHRFQTLP. A helical transmembrane segment spans residues 31–51; that stretch reads LIIAGSLTLTGVLLILVTLLI. Residues 52-683 are Cytoplasmic-facing; sequence YRRLYRNRTA…FPFKSRKKAR (632 aa). The 573-residue stretch at 92–664 folds into the Protein kinase domain; that stretch reads FSESTHLGHG…GVSEPPHLPF (573 aa). ATP is bound by residues 98 to 106 and Lys-121; that span reads LGHGGFGSV. Asp-223 functions as the Proton acceptor in the catalytic mechanism. The segment at 406-436 is disordered; it reads ERPSNNKEWINNGDGSSSVSKKKKKEKKRKP. The segment covering 411 to 424 has biased composition (polar residues); it reads NKEWINNGDGSSSV. Basic residues predominate over residues 425–436; the sequence is SKKKKKEKKRKP.

It belongs to the protein kinase superfamily. Ser/Thr protein kinase family.

Its subcellular location is the cell membrane. The enzyme catalyses L-seryl-[protein] + ATP = O-phospho-L-seryl-[protein] + ADP + H(+). The catalysed reaction is L-threonyl-[protein] + ATP = O-phospho-L-threonyl-[protein] + ADP + H(+). This chain is Receptor-like serine/threonine-protein kinase At2g45590, found in Arabidopsis thaliana (Mouse-ear cress).